We begin with the raw amino-acid sequence, 470 residues long: Probable V-type proton ATPase subunit H 2 (470 aa).

Belongs to the V-ATPase H subunit family. In terms of assembly, V-ATPase is a heteromultimeric enzyme made up of two complexes: the ATP-hydrolytic V1 complex and the proton translocation V0 complex. The V1 complex consists of three catalytic AB heterodimers that form a heterohexamer, three peripheral stalks each consisting of EG heterodimers, one central rotor including subunits D and F, and the regulatory subunits C and H. The proton translocation complex V0 consists of the proton transport subunit a, a ring of proteolipid subunits c9c'', rotary subunit d, subunits e and f, and the accessory subunits vah-19/Ac45 and vah-20/PRR.

Subunit of the V1 complex of vacuolar(H+)-ATPase (V-ATPase), a multisubunit enzyme composed of a peripheral complex (V1) that hydrolyzes ATP and a membrane integral complex (V0) that translocates protons. V-ATPase is responsible for acidifying and maintaining the pH of intracellular compartments and in some cell types, is targeted to the plasma membrane, where it is responsible for acidifying the extracellular environment. Subunit H is essential for V-ATPase activity, but not for the assembly of the complex. The sequence is that of Probable V-type proton ATPase subunit H 2 from Caenorhabditis elegans.